The chain runs to 122 residues: Small ribosomal subunit protein uS13 (122 aa).

A disordered region spans residues 99 to 122; sequence RGQRTHTNARTRKGPAKAIAGKKK.

This sequence belongs to the universal ribosomal protein uS13 family. Part of the 30S ribosomal subunit. Forms a loose heterodimer with protein S19. Forms two bridges to the 50S subunit in the 70S ribosome.

Its function is as follows. Located at the top of the head of the 30S subunit, it contacts several helices of the 16S rRNA. In the 70S ribosome it contacts the 23S rRNA (bridge B1a) and protein L5 of the 50S subunit (bridge B1b), connecting the 2 subunits; these bridges are implicated in subunit movement. Contacts the tRNAs in the A and P-sites. This Rhizobium etli (strain CIAT 652) protein is Small ribosomal subunit protein uS13.